Consider the following 466-residue polypeptide: Asparagine--tRNA ligase (466 aa).

This sequence belongs to the class-II aminoacyl-tRNA synthetase family. As to quaternary structure, homodimer.

The protein localises to the cytoplasm. It carries out the reaction tRNA(Asn) + L-asparagine + ATP = L-asparaginyl-tRNA(Asn) + AMP + diphosphate + H(+). The protein is Asparagine--tRNA ligase of Aeromonas hydrophila subsp. hydrophila (strain ATCC 7966 / DSM 30187 / BCRC 13018 / CCUG 14551 / JCM 1027 / KCTC 2358 / NCIMB 9240 / NCTC 8049).